A 124-amino-acid chain; its full sequence is Profilin-2 (124 aa).

Belongs to the profilin family. Occurs in many kinds of cells as a complex with monomeric actin in a 1:1 ratio. Interacts with forH.

Its subcellular location is the cytoplasm. The protein resides in the cytoskeleton. In terms of biological role, binds to actin and affects the structure of the cytoskeleton. At high concentrations, profilin prevents the polymerization of actin, whereas it enhances it at low concentrations. By binding to PIP2, it inhibits the formation of IP3 and DG. This Dictyostelium discoideum (Social amoeba) protein is Profilin-2 (proB).